The chain runs to 319 residues: HTH-type transcriptional regulator YidZ (319 aa).

An HTH lysR-type domain is found at 8–65; sequence LDLNLLLCLQLLMQERSVTKAAKRMNVTPSAVSKSLAKLRAWFDDPLFVNSPLGLSPT. Residues 25–44 constitute a DNA-binding region (H-T-H motif); sequence VTKAAKRMNVTPSAVSKSLA.

It belongs to the LysR transcriptional regulatory family.

Involved in anaerobic NO protection. This chain is HTH-type transcriptional regulator YidZ, found in Escherichia coli O17:K52:H18 (strain UMN026 / ExPEC).